The following is a 528-amino-acid chain: Ribonuclease Y (528 aa).

The helical transmembrane segment at 15-35 threads the bilayer; sequence SLFFLALICGSIIGYFLYSFF. The KH domain maps to 217 to 277; that stretch reads NISVVNIPNE…IRREIAKKTL (61 aa). The HD domain maps to 343-436; sequence VLKHSLEVAF…VAIADTLSSA (94 aa).

Belongs to the RNase Y family.

The protein resides in the cell membrane. Endoribonuclease that initiates mRNA decay. This chain is Ribonuclease Y, found in Aster yellows witches'-broom phytoplasma (strain AYWB).